Here is a 349-residue protein sequence, read N- to C-terminus: Nicotinate-nucleotide--dimethylbenzimidazole phosphoribosyltransferase (349 aa).

The active-site Proton acceptor is E316.

The protein belongs to the CobT family.

It carries out the reaction 5,6-dimethylbenzimidazole + nicotinate beta-D-ribonucleotide = alpha-ribazole 5'-phosphate + nicotinate + H(+). It functions in the pathway nucleoside biosynthesis; alpha-ribazole biosynthesis; alpha-ribazole from 5,6-dimethylbenzimidazole: step 1/2. Catalyzes the synthesis of alpha-ribazole-5'-phosphate from nicotinate mononucleotide (NAMN) and 5,6-dimethylbenzimidazole (DMB). The sequence is that of Nicotinate-nucleotide--dimethylbenzimidazole phosphoribosyltransferase from Photorhabdus laumondii subsp. laumondii (strain DSM 15139 / CIP 105565 / TT01) (Photorhabdus luminescens subsp. laumondii).